The following is a 201-amino-acid chain: Casparian strip membrane protein 2 (201 aa).

At 1-38 (MKSTGEATAINIGETKSASATTVATTKAIQHPKAGLKR) the chain is on the cytoplasmic side. The chain crosses the membrane as a helical span at residues 39–59 (GLAIFDFILRLSAIGAALAAT). At 60–89 (TTMGTTDQTLPFFTQFFQFQASYDDLPAFS) the chain is on the extracellular side. A helical transmembrane segment spans residues 90–110 (FFVIANAIASGYLFLSLPFSI). At 111–129 (VCIVRPHAMGARLLLVICD) the chain is on the cytoplasmic side. Residues 130–150 (TVMVALTIAAAAAAAAIVYLA) traverse the membrane as a helical segment. Residues 151 to 175 (HNGNSNANWVAICQQFDDFCQSVSG) lie on the Extracellular side of the membrane. The helical transmembrane segment at 176–196 (AVVASFIAAVLFMLMIVLSAF) threads the bilayer. At 197–201 (SLRKH) the chain is on the cytoplasmic side.

The protein belongs to the Casparian strip membrane proteins (CASP) family. As to quaternary structure, homodimer and heterodimers.

The protein resides in the cell membrane. Its function is as follows. Regulates membrane-cell wall junctions and localized cell wall deposition. Required for establishment of the Casparian strip membrane domain (CSD) and the subsequent formation of Casparian strips, a cell wall modification of the root endodermis that determines an apoplastic barrier between the intraorganismal apoplasm and the extraorganismal apoplasm and prevents lateral diffusion. In Vitis vinifera (Grape), this protein is Casparian strip membrane protein 2.